Consider the following 1407-residue polypeptide: DNA-directed RNA polymerase subunit beta' (1407 aa).

Zn(2+) contacts are provided by Cys-70, Cys-72, Cys-85, and Cys-88. Mg(2+) is bound by residues Asp-460, Asp-462, and Asp-464. The Zn(2+) site is built by Cys-814, Cys-888, Cys-895, and Cys-898. An N6-acetyllysine modification is found at Lys-972.

Belongs to the RNA polymerase beta' chain family. In terms of assembly, the RNAP catalytic core consists of 2 alpha, 1 beta, 1 beta' and 1 omega subunit. When a sigma factor is associated with the core the holoenzyme is formed, which can initiate transcription. Mg(2+) is required as a cofactor. Zn(2+) serves as cofactor.

The catalysed reaction is RNA(n) + a ribonucleoside 5'-triphosphate = RNA(n+1) + diphosphate. In terms of biological role, DNA-dependent RNA polymerase catalyzes the transcription of DNA into RNA using the four ribonucleoside triphosphates as substrates. The protein is DNA-directed RNA polymerase subunit beta' of Escherichia coli O1:K1 / APEC.